A 160-amino-acid chain; its full sequence is uncharacterized protein (160 aa).

The next 4 helical transmembrane spans lie at 7–27 (IFLK…CIFL), 48–68 (LVFI…YQAF), 95–115 (AVTI…MAEI), and 121–141 (IIVI…FAAV).

Its subcellular location is the cell membrane. This is an uncharacterized protein from Bacillus subtilis (strain 168).